The chain runs to 200 residues: NADH-quinone oxidoreductase subunit C (200 aa).

It belongs to the complex I 30 kDa subunit family. NDH-1 is composed of 14 different subunits. Subunits NuoB, C, D, E, F, and G constitute the peripheral sector of the complex.

Its subcellular location is the cell inner membrane. It catalyses the reaction a quinone + NADH + 5 H(+)(in) = a quinol + NAD(+) + 4 H(+)(out). In terms of biological role, NDH-1 shuttles electrons from NADH, via FMN and iron-sulfur (Fe-S) centers, to quinones in the respiratory chain. The immediate electron acceptor for the enzyme in this species is believed to be ubiquinone. Couples the redox reaction to proton translocation (for every two electrons transferred, four hydrogen ions are translocated across the cytoplasmic membrane), and thus conserves the redox energy in a proton gradient. The chain is NADH-quinone oxidoreductase subunit C from Maricaulis maris (strain MCS10) (Caulobacter maris).